Consider the following 596-residue polypeptide: Elongation factor 4 (596 aa).

The tr-type G domain occupies 2 to 184 (KHIRNFSIIA…EIIAKIPPPV (183 aa)). Residues 14–19 (DHGKST) and 131–134 (NKID) contribute to the GTP site.

This sequence belongs to the TRAFAC class translation factor GTPase superfamily. Classic translation factor GTPase family. LepA subfamily.

The protein resides in the cell inner membrane. It carries out the reaction GTP + H2O = GDP + phosphate + H(+). Its function is as follows. Required for accurate and efficient protein synthesis under certain stress conditions. May act as a fidelity factor of the translation reaction, by catalyzing a one-codon backward translocation of tRNAs on improperly translocated ribosomes. Back-translocation proceeds from a post-translocation (POST) complex to a pre-translocation (PRE) complex, thus giving elongation factor G a second chance to translocate the tRNAs correctly. Binds to ribosomes in a GTP-dependent manner. The sequence is that of Elongation factor 4 from Shewanella frigidimarina (strain NCIMB 400).